A 1142-amino-acid polypeptide reads, in one-letter code: SNF1-activating kinase 1 (1142 aa).

Positions 22–41 (ELEKSGTSSSVSLRSPTKSS) are disordered. Phosphothreonine is present on threonine 43. Residues 82–93 (QHQQHISSSLAK) are compositionally biased toward polar residues. The interval 82 to 107 (QHQQHISSSLAKTPTTTSSFCSSGSS) is disordered. Residues 94–107 (TPTTTSSFCSSGSS) show a composition bias toward low complexity. Residues 133–448 (YEIIKELGHG…IPAIKKHPFV (316 aa)) form the Protein kinase domain. ATP contacts are provided by residues 139–147 (LGHGQHGKV) and lysine 162. The active-site Proton acceptor is aspartate 277. Disordered stretches follow at residues 634–678 (SPEA…VLPQ), 694–799 (NSLL…NSPI), 825–875 (SHFN…AYSE), 919–971 (KSSL…QKGS), 1005–1027 (SQPI…KATT), and 1066–1142 (STNA…SALP). Residues 640 to 656 (SVSSVPNLPSAPSSTRL) are compositionally biased toward polar residues. Low complexity predominate over residues 694–706 (NSLLRNSSSHLTS). The segment covering 707 to 741 (YNSGRPSSRTGRMNSRNQNLPKIPNSLSKISTTKL) has biased composition (polar residues). The segment covering 742–751 (TELRVPKDSE) has biased composition (basic and acidic residues). A compositionally biased stretch (polar residues) spans 785-799 (NINSSDKSGSKNSPI). 2 stretches are compositionally biased toward low complexity: residues 835-868 (SSQS…RNSS) and 920-936 (SSLN…SSSS). Over residues 958–971 (SKLSELSNSPQKGS) the composition is skewed to polar residues. Serine 964 bears the Phosphoserine mark. Residues 1096–1111 (NDEHARNTSCHGDKGQ) show a composition bias toward basic and acidic residues. At serine 1126 the chain carries Phosphoserine. Residues 1133–1142 (NEEKRRSALP) show a composition bias toward basic and acidic residues.

It belongs to the protein kinase superfamily. Ser/Thr protein kinase family. As to quaternary structure, associates with the SNF1 kinase complex. Interacts with SNF1 and REG1. In terms of processing, autophosphorylated.

Its subcellular location is the cytoplasm. The catalysed reaction is L-seryl-[protein] + ATP = O-phospho-L-seryl-[protein] + ADP + H(+). The enzyme catalyses L-threonyl-[protein] + ATP = O-phospho-L-threonyl-[protein] + ADP + H(+). Functionally, serine/threonine-protein kinase that phosphorylates SNF1, the catalytic subunit of the SNF1 kinase complex. Acts as an activator of the SNF1 kinase complex and controls its nuclear localization upon glucose and nitrogen depletion. Also required for SNF1 kinase activation under other stress conditions like alkaline pH or presence of cadmium. In Saccharomyces cerevisiae (strain ATCC 204508 / S288c) (Baker's yeast), this protein is SNF1-activating kinase 1 (SAK1).